Consider the following 178-residue polypeptide: ATP synthase subunit delta (178 aa).

The protein belongs to the ATPase delta chain family. In terms of assembly, F-type ATPases have 2 components, F(1) - the catalytic core - and F(0) - the membrane proton channel. F(1) has five subunits: alpha(3), beta(3), gamma(1), delta(1), epsilon(1). F(0) has three main subunits: a(1), b(2) and c(10-14). The alpha and beta chains form an alternating ring which encloses part of the gamma chain. F(1) is attached to F(0) by a central stalk formed by the gamma and epsilon chains, while a peripheral stalk is formed by the delta and b chains.

The protein localises to the cell inner membrane. In terms of biological role, f(1)F(0) ATP synthase produces ATP from ADP in the presence of a proton or sodium gradient. F-type ATPases consist of two structural domains, F(1) containing the extramembraneous catalytic core and F(0) containing the membrane proton channel, linked together by a central stalk and a peripheral stalk. During catalysis, ATP synthesis in the catalytic domain of F(1) is coupled via a rotary mechanism of the central stalk subunits to proton translocation. Its function is as follows. This protein is part of the stalk that links CF(0) to CF(1). It either transmits conformational changes from CF(0) to CF(1) or is implicated in proton conduction. This is ATP synthase subunit delta from Ectopseudomonas mendocina (strain ymp) (Pseudomonas mendocina).